The following is a 593-amino-acid chain: Proline--tRNA ligase (593 aa).

Belongs to the class-II aminoacyl-tRNA synthetase family. ProS type 1 subfamily. In terms of assembly, homodimer.

Its subcellular location is the cytoplasm. It carries out the reaction tRNA(Pro) + L-proline + ATP = L-prolyl-tRNA(Pro) + AMP + diphosphate. Functionally, catalyzes the attachment of proline to tRNA(Pro) in a two-step reaction: proline is first activated by ATP to form Pro-AMP and then transferred to the acceptor end of tRNA(Pro). As ProRS can inadvertently accommodate and process non-cognate amino acids such as alanine and cysteine, to avoid such errors it has two additional distinct editing activities against alanine. One activity is designated as 'pretransfer' editing and involves the tRNA(Pro)-independent hydrolysis of activated Ala-AMP. The other activity is designated 'posttransfer' editing and involves deacylation of mischarged Ala-tRNA(Pro). The misacylated Cys-tRNA(Pro) is not edited by ProRS. The sequence is that of Proline--tRNA ligase from Synechococcus sp. (strain CC9605).